The sequence spans 552 residues: C-type lectin receptor-like tyrosine-protein kinase At1g52310 (552 aa).

A signal peptide spans 1–27 (MELKWVSCRKQSLFLISCLALLCLASL). The Extracellular portion of the chain corresponds to 28–201 (DTISCESTQN…DIKCRNCHKY (174 aa)). N-linked (GlcNAc...) asparagine glycans are attached at residues Asn-37, Asn-59, Asn-69, Asn-106, Asn-118, Asn-137, Asn-154, Asn-169, and Asn-180. The 130-residue stretch at 59-188 (NQTKCYAYFK…CNASHAFVCA (130 aa)) folds into the C-type lectin domain. Intrachain disulfides connect Cys-80–Cys-187 and Cys-164–Cys-179. A helical membrane pass occupies residues 202 to 222 (LVILAVVSGLILFTTFAIILW). At 223 to 552 (LLVYKRSKKR…QQLVQPLEVK (330 aa)) the chain is on the cytoplasmic side. Residues 268–546 (SEANRLAGDA…HVVHQLQQLV (279 aa)) enclose the Protein kinase domain. ATP-binding positions include 274–282 (AGDAKTGGT) and Lys-296. Asp-394 (proton acceptor) is an active-site residue.

It belongs to the protein kinase superfamily. Tyr protein kinase family.

Its subcellular location is the cell membrane. It catalyses the reaction L-tyrosyl-[protein] + ATP = O-phospho-L-tyrosyl-[protein] + ADP + H(+). The sequence is that of C-type lectin receptor-like tyrosine-protein kinase At1g52310 from Arabidopsis thaliana (Mouse-ear cress).